The sequence spans 320 residues: Serpentine receptor class delta-40 (320 aa).

7 helical membrane-spanning segments follow: residues 12–32 (IFYP…IYLI), 42–62 (MLKV…VVSC), 95–115 (YQVL…TFVF), 133–153 (IILL…IMVI), 189–209 (LINF…SFFF), 243–263 (AFLP…CILT), and 273–293 (FMTV…LYFV).

The protein belongs to the nematode receptor-like protein srd family.

The protein resides in the membrane. The protein is Serpentine receptor class delta-40 (srd-40) of Caenorhabditis elegans.